The following is a 204-amino-acid chain: Pyrrolidone-carboxylate peptidase (204 aa).

Residues glutamate 78, cysteine 141, and histidine 165 contribute to the active site.

It belongs to the peptidase C15 family. Homotetramer.

It localises to the cytoplasm. It catalyses the reaction Release of an N-terminal pyroglutamyl group from a polypeptide, the second amino acid generally not being Pro.. In terms of biological role, removes 5-oxoproline from various penultimate amino acid residues except L-proline. This chain is Pyrrolidone-carboxylate peptidase, found in Levilactobacillus brevis (strain ATCC 367 / BCRC 12310 / CIP 105137 / JCM 1170 / LMG 11437 / NCIMB 947 / NCTC 947) (Lactobacillus brevis).